The sequence spans 309 residues: Cell division protein FtsQ (309 aa).

Residues 1–52 (MLALRGRRGKRVRYPADGVAEADEAFVLPRPLRRGVRFLISLGAGRIRFPNH) lie on the Cytoplasmic side of the membrane. The chain crosses the membrane as a helical span at residues 53–74 (TGTVAAAAFMVATGLYGMSLGG). Residues 75–309 (HTQSFAQVST…KMLKAQEKRI (235 aa)) lie on the Periplasmic side of the membrane. Positions 89–157 (FAIEDVRVSG…GTIEVVLKER (69 aa)) constitute a POTRA domain.

Belongs to the FtsQ/DivIB family. FtsQ subfamily.

It is found in the cell inner membrane. Functionally, essential cell division protein. This chain is Cell division protein FtsQ, found in Rhizobium meliloti (strain 1021) (Ensifer meliloti).